Here is a 471-residue protein sequence, read N- to C-terminus: ATP synthase subunit beta (471 aa).

156–163 (GGAGVGKT) provides a ligand contact to ATP.

This sequence belongs to the ATPase alpha/beta chains family. F-type ATPases have 2 components, CF(1) - the catalytic core - and CF(0) - the membrane proton channel. CF(1) has five subunits: alpha(3), beta(3), gamma(1), delta(1), epsilon(1). CF(0) has three main subunits: a(1), b(2) and c(9-12). The alpha and beta chains form an alternating ring which encloses part of the gamma chain. CF(1) is attached to CF(0) by a central stalk formed by the gamma and epsilon chains, while a peripheral stalk is formed by the delta and b chains.

It localises to the cell membrane. The enzyme catalyses ATP + H2O + 4 H(+)(in) = ADP + phosphate + 5 H(+)(out). Its function is as follows. Produces ATP from ADP in the presence of a proton gradient across the membrane. The catalytic sites are hosted primarily by the beta subunits. This chain is ATP synthase subunit beta, found in Staphylococcus carnosus (strain TM300).